A 448-amino-acid polypeptide reads, in one-letter code: MESAQDNQGRILLVDDESAILRTFRYCLEDEGYSVATANSAAQAETLLQRQVFDLCFLDLRLGEDNGLDVLAQMRIQAPWMRVVIVTAHSAIDTAVDAIQAGAADYLVKPCSPDQLRLATAKQLEVRQLSARLEALEGEIRKPKDGLDSHSPAMMAVLETARQVAITDANILILGESGTGKGELARAIHGWSKRARKACVTINCPSLNAELMESELFGHTRGAFTGASESTLGRVSQADGGTLFLDEIGDFPLTLQPKLLRFIQDKEYERVGDPVTRRADVRILAATNLNLEEMVRESRFREDLLYRLNVITLHLPPLRERSEDILILADRFLARFVKEYSRPARGFSDEARTALLNYRWPGNIRELRNVVERASIICPQERVEISHLGMGEQPAGSAPRVGAALSLDELERAHIGAVLAASDTLDQAAKTLGIDASTLYRKRKQYNL.

In terms of domain architecture, Response regulatory spans 10–124; sequence RILLVDDESA…QLRLATAKQL (115 aa). Aspartate 59 carries the post-translational modification 4-aspartylphosphate. The Sigma-54 factor interaction domain maps to 147-376; it reads LDSHSPAMMA…LRNVVERASI (230 aa). ATP-binding positions include 175-182 and 238-247; these read GESGTGKG and ADGGTLFLDE. The H-T-H motif DNA-binding region spans 425 to 444; it reads LDQAAKTLGIDASTLYRKRK.

The protein operates within glycan biosynthesis; alginate biosynthesis [regulation]. Its function is as follows. Positive regulator of the alginate biosynthetic gene algD. The polypeptide is Alginate biosynthesis transcriptional regulatory protein AlgB (algB) (Pseudomonas putida (strain ATCC 47054 / DSM 6125 / CFBP 8728 / NCIMB 11950 / KT2440)).